The following is a 328-amino-acid chain: Tyrosine--tRNA ligase (328 aa).

Tyrosine 33 contributes to the L-tyrosine binding site. A 'HIGH' region motif is present at residues 38-46 (PSGVLHIGH). Tyrosine 154, glutamine 158, aspartate 161, and glutamine 176 together coordinate L-tyrosine. The segment at 193–227 (EPPTSLHTPLIADLGTGRGKMSSSEGVTISMEDSR) is disordered. The short motif at 212–216 (KMSSS) is the 'KMSKS' region element. Residue serine 215 participates in ATP binding.

The protein belongs to the class-I aminoacyl-tRNA synthetase family. TyrS type 3 subfamily. As to quaternary structure, homodimer.

It is found in the cytoplasm. The enzyme catalyses tRNA(Tyr) + L-tyrosine + ATP = L-tyrosyl-tRNA(Tyr) + AMP + diphosphate + H(+). In terms of biological role, catalyzes the attachment of tyrosine to tRNA(Tyr) in a two-step reaction: tyrosine is first activated by ATP to form Tyr-AMP and then transferred to the acceptor end of tRNA(Tyr). The chain is Tyrosine--tRNA ligase from Halorubrum lacusprofundi (strain ATCC 49239 / DSM 5036 / JCM 8891 / ACAM 34).